The primary structure comprises 386 residues: ATP synthase gamma chain 2, chloroplastic (386 aa).

Residues 1–22 are disordered; that stretch reads MTGSISTSWLLSSPSNSNSASS. A chloroplast-targeting transit peptide spans 1–60; sequence MTGSISTSWLLSSPSNSNSASSSESYSFIATLKPVRYYPFQSLTPNRISSRSPLPSIQIR. Residue C149 is part of the active site. Cysteines 260 and 266 form a disulfide.

It belongs to the ATPase gamma chain family. F-type ATPases have 2 components, CF(1) - the catalytic core - and CF(0) - the membrane proton channel. CF(1) has five subunits: alpha(3), beta(3), gamma(1), delta(1), epsilon(1). CF(0) has four main subunits: a, b, b' and c.

Its subcellular location is the plastid. It is found in the chloroplast thylakoid membrane. Functionally, produces ATP from ADP in the presence of a proton gradient across the membrane. The gamma chain is believed to be important in regulating ATPase activity and the flow of protons through the CF(0) complex. This is ATP synthase gamma chain 2, chloroplastic (ATPC2) from Arabidopsis thaliana (Mouse-ear cress).